Here is a 226-residue protein sequence, read N- to C-terminus: PKHD-type hydroxylase PLES_48951 (226 aa).

Residues 78–178 (KVFPPLFNCY…RYASFFWTQS (101 aa)) form the Fe2OG dioxygenase domain. Fe cation is bound by residues histidine 96, aspartate 98, and histidine 159. Arginine 169 is a binding site for 2-oxoglutarate.

The cofactor is Fe(2+). It depends on L-ascorbate as a cofactor.

This is PKHD-type hydroxylase PLES_48951 from Pseudomonas aeruginosa (strain LESB58).